A 235-amino-acid polypeptide reads, in one-letter code: Large ribosomal subunit protein uL1 (235 aa).

Belongs to the universal ribosomal protein uL1 family. Part of the 50S ribosomal subunit.

Binds directly to 23S rRNA. The L1 stalk is quite mobile in the ribosome, and is involved in E site tRNA release. In terms of biological role, protein L1 is also a translational repressor protein, it controls the translation of the L11 operon by binding to its mRNA. This is Large ribosomal subunit protein uL1 from Prochlorococcus marinus (strain MIT 9515).